A 567-amino-acid chain; its full sequence is Wee1-like protein kinase 2 (567 aa).

Composition is skewed to basic and acidic residues over residues 1–12 (MDDSSINKELKQ) and 26–36 (EGQKEAPESRE). 2 disordered regions span residues 1-103 (MDDS…DSRS) and 170-191 (RSNG…EGKV). S77 is modified (phosphoserine). The Nuclear localization signal motif lies at 174–176 (KRK). Residues 215–494 (FLEVEKIGVG…ARSRVLRPSL (280 aa)) form the Protein kinase domain. Residues 221 to 229 (IGVGEFGTV) and K244 each bind ATP. Residues 318 to 332 (KLKDILLQISLGLKY) carry the Nuclear export signal motif. D342 serves as the catalytic Proton acceptor. Positions 347 and 384 each coordinate Mg(2+). Residues 497–523 (AEELQQQLNLEKSKTATLERELREAQQ) adopt a coiled-coil conformation. The tract at residues 502 to 567 (QQLNLEKSKT…SSFTCGKSSP (66 aa)) is disordered. Positions 507–520 (EKSKTATLERELRE) are enriched in basic and acidic residues. The segment covering 555–567 (AKSSSFTCGKSSP) has biased composition (polar residues).

Belongs to the protein kinase superfamily. Ser/Thr protein kinase family. WEE1 subfamily. In terms of processing, phosphorylation leads to increase its activity.

It localises to the nucleus. It carries out the reaction L-tyrosyl-[protein] + ATP = O-phospho-L-tyrosyl-[protein] + ADP + H(+). Oocyte-specific protein tyrosine kinase that phosphorylates and inhibits CDK1 and acts as a key regulator of meiosis during both prophase I and metaphase II. Required to maintain meiotic arrest in oocytes during the germinal vesicle (GV) stage, a long period of quiescence at dictyate prophase I, by phosphorylating CDK1 at 'Tyr-15', leading to inhibit CDK1 activity and prevent meiotic reentry. Also required for metaphase II exit during egg activation by phosphorylating CDK1 at 'Tyr-15', to ensure exit from meiosis in oocytes and promote pronuclear formation. In Canis lupus familiaris (Dog), this protein is Wee1-like protein kinase 2 (WEE2).